A 673-amino-acid chain; its full sequence is UvrABC system protein B (673 aa).

In terms of domain architecture, Helicase ATP-binding spans 26–183 (EGLEDGLAHQ…RRLAELQYTR (158 aa)). 39 to 46 (GVTGSGKT) provides a ligand contact to ATP. The Beta-hairpin motif lies at 92 to 115 (YYDYYQPEAYVPSSDTFIEKDASV). Residues 431 to 597 (QVDDLLSEIR…GLNKKVVDIL (167 aa)) enclose the Helicase C-terminal domain. A UVR domain is found at 633–668 (QQKIHELEGQMMQHAQNLEFEEAAQIRDQLHQLREL).

It belongs to the UvrB family. Forms a heterotetramer with UvrA during the search for lesions. Interacts with UvrC in an incision complex.

It localises to the cytoplasm. Functionally, the UvrABC repair system catalyzes the recognition and processing of DNA lesions. A damage recognition complex composed of 2 UvrA and 2 UvrB subunits scans DNA for abnormalities. Upon binding of the UvrA(2)B(2) complex to a putative damaged site, the DNA wraps around one UvrB monomer. DNA wrap is dependent on ATP binding by UvrB and probably causes local melting of the DNA helix, facilitating insertion of UvrB beta-hairpin between the DNA strands. Then UvrB probes one DNA strand for the presence of a lesion. If a lesion is found the UvrA subunits dissociate and the UvrB-DNA preincision complex is formed. This complex is subsequently bound by UvrC and the second UvrB is released. If no lesion is found, the DNA wraps around the other UvrB subunit that will check the other stand for damage. The protein is UvrABC system protein B of Klebsiella pneumoniae subsp. pneumoniae (strain ATCC 700721 / MGH 78578).